A 337-amino-acid polypeptide reads, in one-letter code: Draxin (337 aa).

The N-terminal stretch at 1 to 24 is a signal peptide; sequence MLLLALLLLLELSLAGSLGPGSSA. Disordered regions lie at residues 36-67, 107-133, and 234-261; these read GPAL…WTQD, RPYP…KRRK, and WPST…KGEP. Basic residues-rich tracts occupy residues 122–133 and 237–246; these read VKKRGREHKRRK and TRKKEKHRGK. N252 carries N-linked (GlcNAc...) asparagine glycosylation.

Belongs to the draxin family. In terms of assembly, interacts with LRP6.

The protein resides in the secreted. Its function is as follows. Chemorepulsive axon guidance protein required for the development of spinal cord and forebrain commissures. Acts as a chemorepulsive guidance protein for commissural axons during development. Able to inhibit or repel neurite outgrowth from dorsal spinal cord. Inhibits the stabilization of cytosolic beta-catenin (CTNNB1) via its interaction with LRP6, thereby acting as an antagonist of Wnt signaling pathway. The chain is Draxin from Bos taurus (Bovine).